The chain runs to 163 residues: Putative 4-hydroxy-4-methyl-2-oxoglutarate aldolase (163 aa).

Residues 79 to 82 and Arg101 each bind substrate; that span reads GDQL. A divalent metal cation is bound at residue Asp102.

Belongs to the class II aldolase/RraA-like family. Homotrimer. A divalent metal cation is required as a cofactor.

The catalysed reaction is 4-hydroxy-4-methyl-2-oxoglutarate = 2 pyruvate. It catalyses the reaction oxaloacetate + H(+) = pyruvate + CO2. Functionally, catalyzes the aldol cleavage of 4-hydroxy-4-methyl-2-oxoglutarate (HMG) into 2 molecules of pyruvate. Also contains a secondary oxaloacetate (OAA) decarboxylase activity due to the common pyruvate enolate transition state formed following C-C bond cleavage in the retro-aldol and decarboxylation reactions. This is Putative 4-hydroxy-4-methyl-2-oxoglutarate aldolase from Dechloromonas aromatica (strain RCB).